A 380-amino-acid chain; its full sequence is MSAAIDAVELSRELIRKPSVTPADEGAMDVVERTLAGLGFACRRMRFGEIENLYARYGTARPNLCFAGHTDVVPVGDAAAWSKDAFAADVVDGVLIGRGAVDMKSAIAAFAAAAAEAIAAGRVTGSVSFLITGDEEGVATHGTKKVVEALLAEGEAIDHCVVGEPTSAESFGDMVKVGRRGSINAEILVEGIQGHVAYPHRAANPVPVLVRLLAALQDRALDEGYPEFQPSNLEVTMIDVPNTATNVIPGTAKARLNIRFNPNHTGQALADWIAAEARKAADGFKGKVTVTPQISGEAFLTERGPFTELVAAAVKDVTGAEPELSTSGGTSDARFIRALCPVVEVGLVGRTMHQVDERAPVDEIRRLQAVYAAIIARYFA.

Residue histidine 69 participates in Zn(2+) binding. Aspartate 71 is a catalytic residue. Aspartate 102 is a binding site for Zn(2+). The active-site Proton acceptor is glutamate 135. Positions 136, 164, and 353 each coordinate Zn(2+).

It belongs to the peptidase M20A family. DapE subfamily. As to quaternary structure, homodimer. Zn(2+) is required as a cofactor. Co(2+) serves as cofactor.

The catalysed reaction is N-succinyl-(2S,6S)-2,6-diaminopimelate + H2O = (2S,6S)-2,6-diaminopimelate + succinate. The protein operates within amino-acid biosynthesis; L-lysine biosynthesis via DAP pathway; LL-2,6-diaminopimelate from (S)-tetrahydrodipicolinate (succinylase route): step 3/3. Functionally, catalyzes the hydrolysis of N-succinyl-L,L-diaminopimelic acid (SDAP), forming succinate and LL-2,6-diaminopimelate (DAP), an intermediate involved in the bacterial biosynthesis of lysine and meso-diaminopimelic acid, an essential component of bacterial cell walls. This is Succinyl-diaminopimelate desuccinylase from Phenylobacterium zucineum (strain HLK1).